A 110-amino-acid polypeptide reads, in one-letter code: Nucleoid-associated protein CbuK_1603 (110 aa).

Belongs to the YbaB/EbfC family. Homodimer.

It localises to the cytoplasm. The protein localises to the nucleoid. Functionally, binds to DNA and alters its conformation. May be involved in regulation of gene expression, nucleoid organization and DNA protection. In Coxiella burnetii (strain CbuK_Q154) (Coxiella burnetii (strain Q154)), this protein is Nucleoid-associated protein CbuK_1603.